A 115-amino-acid polypeptide reads, in one-letter code: NADH-ubiquinone oxidoreductase chain 3 (115 aa).

Helical transmembrane passes span 3-23 (FALI…ITFW), 55-75 (FFLV…LLPL), and 84-104 (LPLM…SLAY).

It belongs to the complex I subunit 3 family. As to quaternary structure, core subunit of respiratory chain NADH dehydrogenase (Complex I) which is composed of 45 different subunits. Interacts with TMEM186. Interacts with TMEM242.

It localises to the mitochondrion inner membrane. It carries out the reaction a ubiquinone + NADH + 5 H(+)(in) = a ubiquinol + NAD(+) + 4 H(+)(out). Core subunit of the mitochondrial membrane respiratory chain NADH dehydrogenase (Complex I) which catalyzes electron transfer from NADH through the respiratory chain, using ubiquinone as an electron acceptor. Essential for the catalytic activity of complex I. The polypeptide is NADH-ubiquinone oxidoreductase chain 3 (Gorilla gorilla gorilla (Western lowland gorilla)).